The following is a 460-amino-acid chain: tRNA(Ile)-lysidine synthase (460 aa).

Residue Ser-37–Ser-42 participates in ATP binding.

The protein belongs to the tRNA(Ile)-lysidine synthase family.

It localises to the cytoplasm. The enzyme catalyses cytidine(34) in tRNA(Ile2) + L-lysine + ATP = lysidine(34) in tRNA(Ile2) + AMP + diphosphate + H(+). Ligates lysine onto the cytidine present at position 34 of the AUA codon-specific tRNA(Ile) that contains the anticodon CAU, in an ATP-dependent manner. Cytidine is converted to lysidine, thus changing the amino acid specificity of the tRNA from methionine to isoleucine. This Treponema denticola (strain ATCC 35405 / DSM 14222 / CIP 103919 / JCM 8153 / KCTC 15104) protein is tRNA(Ile)-lysidine synthase.